Here is a 510-residue protein sequence, read N- to C-terminus: DAP3-binding cell death enhancer 1 (510 aa).

The N-terminal 23 residues, 1–23 (MWRLTGILGRALPRLLGPGFRGI), are a transit peptide targeting the mitochondrion. Disordered regions lie at residues 19–61 (GFRG…SRDP) and 142–185 (VLPR…SGLL). Residues 24-101 (TPKPTSSDGS…AVLALHLARQ (78 aa)) constitute a propeptide, extended MTS. A compositionally biased stretch (low complexity) spans 35 to 45 (TTSPTLPLTRL). 2 stretches are compositionally biased toward basic and acidic residues: residues 46-61 (SFDR…SRDP) and 155-167 (GLRE…EDHP). Residues 169–181 (APSQCLPSDSSLR) show a composition bias toward polar residues. TPR repeat units follow at residues 213–245 (AHPP…QLSV), 246–278 (AITF…RGYS), 279–313 (KAQY…VQGH), 314–351 (SLAQ…DSGL), 352–385 (TEAQ…SNGD), 386–423 (SQSR…GNEP), and 471–499 (ASST…TIPS). An SIFI-degron motif is present at residues 307–326 (LAAVQGHSLAQYRYARCLLQ).

It belongs to the DELE1 family. As to quaternary structure, interacts with DAP3. In terms of assembly, interacts (via TPR repeats) with EIF2AK1/HRI; activating the protein kinase activity of EIF2AK1/HRI, thereby promoting the integrated stress response (ISR). Homooctamer; oligomerization is required to activate EIF2AK1/HRI. Interacts (via TPR repeats) with EIF2AK1/HRI; activating the protein kinase activity of EIF2AK1/HRI, thereby promoting the integrated stress response (ISR). Post-translationally, unstable protein in absence of stress: imported in the mitochondrial matrix following processing by the mitochondrial-processing peptidase (MPP), where it is degraded by LONP1. Stabilized in response to iron deficiency: iron deficiency impairs mitochondrial import, promoting localization at the mitochondrial surface and stabilization. Cleaved by OMA1 in response to mitochondrial stress, generating the DAP3-binding cell death enhancer 1 short form (DELE1(S) or S-DELE1) that accumulates in the cytosol and activates the protein kinase activity of EIF2AK1/HRI. Protein cleavage by OMA1 can take place at different positions, and apparently does not require a specific sequence motif. Ubiquitinated and degraded by the SIFI complex once the mitochondrial stress has been resolved, thereby providing stress response silencing. Within the SIFI complex, UBR4 initiates ubiquitin chain that are further elongated or branched by KCMF1.

Its subcellular location is the mitochondrion. The protein localises to the mitochondrion outer membrane. It is found in the mitochondrion inner membrane. It localises to the cytoplasm. The protein resides in the cytosol. Protein kinase activator that acts as a key activator of the integrated stress response (ISR) following various stresses, such as iron deficiency, mitochondrial stress or mitochondrial DNA breaks. Detects impaired protein import and processing in mitochondria, activating the ISR. May also required for the induction of death receptor-mediated apoptosis through the regulation of caspase activation. In terms of biological role, protein kinase activator that activates the ISR in response to iron deficiency: iron deficiency impairs mitochondrial import, promoting DELE1 localization at the mitochondrial surface, where it binds and activates EIF2AK1/HRI to trigger the ISR. Its function is as follows. Protein kinase activator generated by protein cleavage in response to mitochondrial stress, which accumulates in the cytosol and specifically binds to and activates the protein kinase activity of EIF2AK1/HRI. It thereby activates the integrated stress response (ISR): EIF2AK1/HRI activation promotes eIF-2-alpha (EIF2S1) phosphorylation, leading to a decrease in global protein synthesis and the induction of selected genes, including the transcription factor ATF4, the master transcriptional regulator of the ISR. Also acts as an activator of PRKN-independent mitophagy: activates the protein kinase activity of EIF2AK1/HRI in response to mitochondrial damage, promoting eIF-2-alpha (EIF2S1) phosphorylation, leading to mitochondrial localization of EIF2S1 followed by induction of mitophagy. The chain is DAP3-binding cell death enhancer 1 from Mus musculus (Mouse).